The primary structure comprises 95 residues: Cell division topological specificity factor (95 aa).

Belongs to the MinE family.

In terms of biological role, prevents the cell division inhibition by proteins MinC and MinD at internal division sites while permitting inhibition at polar sites. This ensures cell division at the proper site by restricting the formation of a division septum at the midpoint of the long axis of the cell. In Methylorubrum extorquens (strain CM4 / NCIMB 13688) (Methylobacterium extorquens), this protein is Cell division topological specificity factor.